The following is a 506-amino-acid chain: DEAD-box ATP-dependent RNA helicase CshA (506 aa).

A Q motif motif is present at residues 2–30 (QNFKELGISDNTVQSLESMGFKEPTPIQK). Residues 33-203 (IPYALQGIDI…QQFMKSPKII (171 aa)) form the Helicase ATP-binding domain. 46 to 53 (AQTGTGKT) contacts ATP. The DEAD box signature appears at 150–153 (DEAD). In terms of domain architecture, Helicase C-terminal spans 214-375 (QIEEFYTIVK…LRPPHRKEVL (162 aa)). Residues 436-506 (EKPLSRKGRN…KGRTFADHQK (71 aa)) are disordered. Basic residues predominate over residues 468 to 480 (KRSKGYSSKKKST).

It belongs to the DEAD box helicase family. CshA subfamily. As to quaternary structure, oligomerizes, may be a member of the RNA degradosome.

Its subcellular location is the cytoplasm. The enzyme catalyses ATP + H2O = ADP + phosphate + H(+). Its function is as follows. DEAD-box RNA helicase possibly involved in RNA degradation. Unwinds dsRNA in both 5'- and 3'-directions, has RNA-dependent ATPase activity. The chain is DEAD-box ATP-dependent RNA helicase CshA from Staphylococcus aureus (strain MRSA252).